A 198-amino-acid chain; its full sequence is Ribonuclease HII (198 aa).

Residues 11–198 (TCIAGVDEVG…APVKRALGLA (188 aa)) enclose the RNase H type-2 domain. Residues aspartate 17, glutamate 18, and aspartate 109 each coordinate a divalent metal cation.

The protein belongs to the RNase HII family. Mn(2+) serves as cofactor. Requires Mg(2+) as cofactor.

It is found in the cytoplasm. The catalysed reaction is Endonucleolytic cleavage to 5'-phosphomonoester.. In terms of biological role, endonuclease that specifically degrades the RNA of RNA-DNA hybrids. The protein is Ribonuclease HII of Pectobacterium carotovorum subsp. carotovorum (strain PC1).